A 34-amino-acid polypeptide reads, in one-letter code: Papillosin (34 aa).

Its function is as follows. Has strong antibacterial activity against the Gram-positive bacteria M.luteus, S.aureus, B.megaterium, A.viridans and E.faecalis, and against the Gram-negative bacteria K.pneumoniae, E.coli DH5alpha, S.typhimurium, P.aeruginosa and E.aerogenes. Lacks hemolytic activity against sheep erythrocytes. This is Papillosin from Halocynthia papillosa (Red sea-squirt).